Here is a 527-residue protein sequence, read N- to C-terminus: Bromodomain-containing protein 9 (527 aa).

A compositionally biased stretch (basic residues) spans 1–16 (MNVSVTKRRKKKKKKK). The interval 1 to 54 (MNVSVTKRRKKKKKKKSEKEKDKYLDEDERRRRKEEKKRKREKEQCDSEGETEV) is disordered. The segment covering 17–30 (SEKEKDKYLDEDER) has biased composition (basic and acidic residues). Residues 31–41 (RRRKEEKKRKR) show a composition bias toward basic residues. One can recognise a Bromo domain in the interval 78-182 (NESTPLQQLL…HTGFKMMSKA (105 aa)). Residues 156–158 (TYN) form a histone H4K5ac H4K8ac and histone H4K5bu H4K8bu binding region. The span at 468 to 478 (DFHDVHNDRGG) shows a compositional bias: basic and acidic residues. The tract at residues 468 to 527 (DFHDVHNDRGGSRPSSSSSMSNNSERDHHLGSPSRISVGEQQDIHDPYEFLQSPETDNQN) is disordered. Positions 479–490 (SRPSSSSSMSNN) are enriched in low complexity.

As to quaternary structure, binds acetylated histones H3 and H4. Binds butyrylated histone H4.

Its subcellular location is the nucleus. Plays a role in chromatin remodeling and regulation of transcription. Acts as a chromatin reader that recognizes and binds acylated histones: binds histones that are acetylated and/or butyrylated. The protein is Bromodomain-containing protein 9 (brd9) of Xenopus laevis (African clawed frog).